Consider the following 128-residue polypeptide: MKKMLVEFRDFALKGNVLDLAVAVVIGAAFGKIVSSLVDNIIMPLVGVLLGGLDFTDLSFKVGKSVIQYGAFIQSIVDFIIIAFAIFIFVKVLTSFIKKKEQTVEETPVPPTEEYLKEIRDLLKEQQK.

The next 2 membrane-spanning stretches (helical) occupy residues 11 to 31 and 70 to 90; these read FALK…AAFG and GAFI…FIFV.

The protein belongs to the MscL family. In terms of assembly, homopentamer.

Its subcellular location is the cell membrane. In terms of biological role, channel that opens in response to stretch forces in the membrane lipid bilayer. May participate in the regulation of osmotic pressure changes within the cell. The polypeptide is Large-conductance mechanosensitive channel (Listeria monocytogenes serotype 4a (strain HCC23)).